We begin with the raw amino-acid sequence, 548 residues long: MERQSMALVGDKEEIIRKSFEYHPTVWGDYFIRNYSCLPLEKECMIKRVEELKDRVRNLFEETHDVLQIMILVDSIQLLGLDYHFEKEITAALRLIYEADVENYGLYEVSLRFRLLRQHGYNLSPDVFNKFKDDKGRFLPTLNGDAKGLLNLYNAAYLGTHEETILDEAISFTKCQLESLLGELEQPLAIEVSLFLETPLYRRTRRLLVRKYIPIYQEKVMRNDTILELAKLDFNLLQSLHQEEVKKITIWWNDLALTKSLKFARDRVVECYYWIVAVYFEPQYSRARVITSKAISLMSIMDDIYDNYSTLEESRLLTEAIERWEPQAVDCVPEYLKDFYLKLLKTYKDFEDELEPNEKYRIPYLQEEIKVLSRAYFQEAKWGVERYVPALEEHLLVSLITAGYFAVACASYVGLGEDATKETFEWVASSPKILKSCSIHCRLMDDITSHQREQERDHFASTVESYMKEHGTSAKVACEKLQVMVEQKWKDLNEECLRPTQVARPLIEIILNLSRAMEDIYKHKDTYTNSNTRMKDNVSLIFVESFLI.

Residues aspartate 302, aspartate 306, and glutamate 453 each coordinate Mg(2+). Positions 302 to 306 match the DDXXD motif motif; it reads DDIYD.

This sequence belongs to the terpene synthase family. As to expression, mostly expressed in rhizomes.

The enzyme catalyses (2E,6E)-farnesyl diphosphate = alpha-humulene + diphosphate. In terms of biological role, catalyzes the formation of alpha-humulene in the first step of zerumbone biosynthesis, a highly promising multi-anticancer agent. Also mediates formation of beta-caryophyllene at a much lower level. This is Alpha-humulene synthase (ZSS1) from Zingiber zerumbet (Shampoo ginger).